Here is a 146-residue protein sequence, read N- to C-terminus: UPF0260 protein Swit_2819 (146 aa).

Belongs to the UPF0260 family.

In Rhizorhabdus wittichii (strain DSM 6014 / CCUG 31198 / JCM 15750 / NBRC 105917 / EY 4224 / RW1) (Sphingomonas wittichii), this protein is UPF0260 protein Swit_2819.